The chain runs to 494 residues: Glutamyl-tRNA(Gln) amidotransferase subunit A (494 aa).

Active-site charge relay system residues include Lys72 and Ser147. The Acyl-ester intermediate role is filled by Ser171.

This sequence belongs to the amidase family. GatA subfamily. In terms of assembly, heterotrimer of A, B and C subunits.

The catalysed reaction is L-glutamyl-tRNA(Gln) + L-glutamine + ATP + H2O = L-glutaminyl-tRNA(Gln) + L-glutamate + ADP + phosphate + H(+). Functionally, allows the formation of correctly charged Gln-tRNA(Gln) through the transamidation of misacylated Glu-tRNA(Gln) in organisms which lack glutaminyl-tRNA synthetase. The reaction takes place in the presence of glutamine and ATP through an activated gamma-phospho-Glu-tRNA(Gln). This Methylacidiphilum infernorum (isolate V4) (Methylokorus infernorum (strain V4)) protein is Glutamyl-tRNA(Gln) amidotransferase subunit A.